Reading from the N-terminus, the 233-residue chain is Large ribosomal subunit protein uL1 (233 aa).

It belongs to the universal ribosomal protein uL1 family. As to quaternary structure, part of the 50S ribosomal subunit.

Functionally, binds directly to 23S rRNA. The L1 stalk is quite mobile in the ribosome, and is involved in E site tRNA release. Its function is as follows. Protein L1 is also a translational repressor protein, it controls the translation of the L11 operon by binding to its mRNA. The protein is Large ribosomal subunit protein uL1 of Deinococcus geothermalis (strain DSM 11300 / CIP 105573 / AG-3a).